A 963-amino-acid polypeptide reads, in one-letter code: Ubiquitin carboxyl-terminal hydrolase 4 (963 aa).

In terms of domain architecture, DUSP spans 11–122 (PDAETQKSEL…GQQPIVRKVV (112 aa)). Residues 27-216 (TLQRGAQWYL…LYQGQVLVIE (190 aa)) form a necessary for interaction with SART3 region. The Nuclear export signal signature appears at 133-141 (VEVYLLELK). Residues 142–226 (LCENSDPTNV…PQNEDGTWPR (85 aa)) form the Ubiquitin-like 1 domain. A disordered region spans residues 219 to 277 (NEDGTWPRQTQQSKSSTAPSRNFTTSPKSSASPYSSVSASPIANGDSTNTSGMHSSGVS). Residues 225–243 (PRQTQQSKSSTAPSRNFTT) show a composition bias toward polar residues. Residues 229–295 (QQSKSSTAPS…SYNCQESPLT (67 aa)) are required for USP4 activation by providing conformational flexibility between the DUSP and catalytic domains. Over residues 244-261 (SPKSSASPYSSVSASPIA) the composition is skewed to low complexity. The 622-residue stretch at 302–923 (CGLGNLGNTC…AAYVLFYQRR (622 aa)) folds into the USP domain. The Nucleophile role is filled by C311. The segment at 384–386 (PQF) is regulates ubiquitin dissociation. Residues 405–407 (LHE) form a necessary for interaction with RBL2 region. S445 bears the Phosphoserine mark. The tract at residues 459 to 463 (LVCPE) is necessary for interaction with RB1 and RBL2. 2 residues coordinate Zn(2+): C461 and C464. The 89-residue stretch at 483–571 (LKKDRVMEIF…IFVYEVCSTS (89 aa)) folds into the Ubiquitin-like 2 domain. The interacts with DUSP and ubiquitin-like 1 domains and is required for USP4 activation stretch occupies residues 485–775 (KDRVMEIFLV…LQPQKKKKTA (291 aa)). A disordered region spans residues 634 to 701 (PLPDESGSSP…ATQKKNKGRP (68 aa)). Phosphoserine occurs at positions 675 and 680. A Nuclear localization signal motif is present at residues 767–772 (QPQKKK). Positions 799 and 802 each coordinate Zn(2+). H881 serves as the catalytic Proton acceptor. The segment at 930-963 (TPSLSFPGSSDGGARPSSSQQGTGDDETYSMDTN) is disordered. Residues 953-963 (GDDETYSMDTN) show a composition bias toward acidic residues.

It belongs to the peptidase C19 family. USP4 subfamily. Interacts with RB1 (both dephosphorylated and hypophosphorylated forms). Interacts with RBL1 and RBL2. Interacts with ADORA2A (via cytoplasmic C-terminus); the interaction is direct. Interacts with SART3; recruits USP4 to its substrate PRPF3. Post-translationally, phosphorylated at Ser-445 by PKB/AKT1 in response to EGF stimulus, promoting its ability deubiquitinate RHEB. In terms of processing, monoubiquitinated by TRIM21. Ubiquitination does not lead to its proteasomal degradation. Autodeubiquitinated.

It localises to the cytoplasm. The protein resides in the nucleus. It catalyses the reaction Thiol-dependent hydrolysis of ester, thioester, amide, peptide and isopeptide bonds formed by the C-terminal Gly of ubiquitin (a 76-residue protein attached to proteins as an intracellular targeting signal).. With respect to regulation, the completion of the deubiquitinase reaction is mediated by the DUSP and ubiquitin-like 1 domains which promotes the release of ubiquitin from the catalytic site enabling subsequent reactions to occur. Deubiquitinating enzyme that removes conjugated ubiquitin from target proteins. Deubiquitinates PDPK1. Deubiquitinates TRIM21. Deubiquitinates receptor ADORA2A which increases the amount of functional receptor at the cell surface. Deubiquitinates HAS2. Deubiquitinates RHEB in response to EGF signaling, promoting mTORC1 signaling. May regulate mRNA splicing through deubiquitination of the U4 spliceosomal protein PRPF3. This may prevent its recognition by the U5 component PRPF8 thereby destabilizing interactions within the U4/U6.U5 snRNP. May also play a role in the regulation of quality control in the ER. The protein is Ubiquitin carboxyl-terminal hydrolase 4 (USP4) of Bos taurus (Bovine).